The sequence spans 817 residues: ABC transporter G family member STR (817 aa).

Residues Met-1 to Asn-30 are disordered. At Met-1–Pro-542 the chain is on the cytoplasmic side. Positions Leu-43–Asp-294 constitute an ABC transporter domain. Gly-87 to Ser-94 is an ATP binding site. Disordered regions lie at residues Gln-321–Thr-349, Gly-362–Arg-395, and Arg-439–Ser-463. Residues Gly-362 to Phe-375 are compositionally biased toward polar residues. Residues Leu-377–Phe-388 show a composition bias toward acidic residues. The helical transmembrane segment at Glu-543–Phe-563 threads the bilayer. The Extracellular segment spans residues Lys-564 to Asn-579. Residues Phe-580–Ile-600 form a helical membrane-spanning segment. Residues Met-601–Val-621 lie on the Cytoplasmic side of the membrane. Residues Ile-622 to Ile-642 form a helical membrane-spanning segment. The Extracellular segment spans residues Thr-643–Trp-657. Residues Met-658–Val-678 traverse the membrane as a helical segment. Topologically, residues Pro-679 to Tyr-681 are cytoplasmic. The chain crosses the membrane as a helical span at residues Ile-682–Phe-702. The Extracellular portion of the chain corresponds to Leu-703–Trp-787. An N-linked (GlcNAc...) asparagine glycan is attached at Asn-762. Residues Tyr-788–Leu-808 traverse the membrane as a helical segment. Over Arg-809–Lys-817 the chain is Cytoplasmic.

Belongs to the ABC transporter superfamily. ABCG family. Stunted arbuscule (STR) subfamily. Heterodimerizes with STR2; the resulting transporter is located in the peri-arbuscular membrane. In terms of tissue distribution, expressed constitutively in the vascular tissue of roots.

The protein localises to the cell membrane. In terms of biological role, together with STR2, required for arbuscule development in arbuscular mycorrhizal (AM) symbiosis. The protein is ABC transporter G family member STR of Medicago truncatula (Barrel medic).